The chain runs to 254 residues: Ferritin, chloroplastic (254 aa).

Residues 1–48 constitute a chloroplast transit peptide; the sequence is MALAPSKVSPFSGFSLSDGVGAVRNPTCSVSLSFLNKKVGSRNLGVSA. The segment at 49–81 is extension peptide (EP); the sequence is STVPLTGVIFEPFEEVKKEELAVPTAGQVSLAR. The Ferritin-like diiron domain maps to 82-235; the sequence is QYYADECESA…EYVAQLRMVG (154 aa). Fe cation is bound by residues E99, E134, H137, E183, and Q217.

Belongs to the ferritin family. Oligomer of 24 subunits. There are two types of subunits: L (light) chain and H (heavy) chain. The major chain can be light or heavy, depending on the species and tissue type. The functional molecule forms a roughly spherical shell with a diameter of 12 nm and contains a central cavity into which the insoluble mineral iron core is deposited.

It is found in the plastid. Its subcellular location is the chloroplast. It carries out the reaction 4 Fe(2+) + O2 + 4 H(+) = 4 Fe(3+) + 2 H2O. Stores iron in a soluble, non-toxic, readily available form. Important for iron homeostasis. Has ferroxidase activity. Iron is taken up in the ferrous form and deposited as ferric hydroxides after oxidation. The polypeptide is Ferritin, chloroplastic (PFE) (Phaseolus vulgaris (Kidney bean)).